A 533-amino-acid chain; its full sequence is MQRDTERAAQLSPSSEDEALVLRQKPLEMPAQEEDSTTLQQWKARQLQRLAEELKAEWQEARLQQVRQAERLYLSHLLDEAAERSMGNDPSVHEQNQRRTAKHTRAKERNRAAFREERGRREEHPRQHPKSRKKAPCSERRSSAKARGPASGEKGKRRRVSSSKDHDGYQGPRVTRRVGVAKLNPFFDGDTDCMEDVQKEFFREGRRPSAKGTHNLRDQSLQGKTTALTQPLLHGPTCKQEAAAQEPPSKYNKNLWHKEIESTFEELFNMNRKLKKHLNLHLEQRLKADQNPDEQQSYSEIRSETFGTPREERTEEVETAEESGSPTEVETTEMWSKVNLKQILSDSEYPRYQQIAKYPLKSESLVPVKAGTSREQDDLLSLSPESGQEPPKSPLLEDESLKPYLQKQADSVASWMALRQKQKAELEQRRQKALLELTEHPNMSLEIHYKAELEEERRARRRMRLALLKSNSTGICALPPDRNNLSLDNGLLDEDKQNQMIRDLQQQILEQNKLHQEFLEKARKRLQEFQKSF.

Disordered regions lie at residues 1–40 (MQRDTERAAQLSPSSEDEALVLRQKPLEMPAQEEDSTTLQ), 84–176 (RSMG…RVTR), 286–333 (LKAD…ETTE), and 370–399 (AGTSREQDDLLSLSPESGQEPPKSPLLEDE). Positions 40–72 (QQWKARQLQRLAEELKAEWQEARLQQVRQAERL) form a coiled coil. Over residues 107–126 (KERNRAAFREERGRREEHPR) the composition is skewed to basic and acidic residues. Residues 416–531 (MALRQKQKAE…ARKRLQEFQK (116 aa)) are a coiled coil.

In terms of tissue distribution, expressed in mature spermatozoa (at protein level). Detected in retina, lung and kidney. In brain, highly expressed in brain-stem, cerebral cortex and thalamus with lesser expression in cerebellum and hippocampus.

The protein localises to the cell projection. Its subcellular location is the cilium. This is CEP295 N-terminal-like protein from Mus musculus (Mouse).